We begin with the raw amino-acid sequence, 447 residues long: Argininosuccinate synthase (447 aa).

Residues 17–25 and alanine 43 contribute to the ATP site; that span reads AFSGGLDTS. L-citrulline is bound at residue tyrosine 99. Residues glycine 129 and threonine 131 each coordinate ATP. Residues threonine 131, asparagine 135, and aspartate 136 each coordinate L-aspartate. Asparagine 135 contacts L-citrulline. Aspartate 136 lines the ATP pocket. L-citrulline contacts are provided by arginine 139 and serine 192. Residue aspartate 194 participates in ATP binding. The L-citrulline site is built by threonine 201, glutamate 203, and glutamate 280.

It belongs to the argininosuccinate synthase family. Type 2 subfamily. In terms of assembly, homotetramer.

It localises to the cytoplasm. The catalysed reaction is L-citrulline + L-aspartate + ATP = 2-(N(omega)-L-arginino)succinate + AMP + diphosphate + H(+). It participates in amino-acid biosynthesis; L-arginine biosynthesis; L-arginine from L-ornithine and carbamoyl phosphate: step 2/3. The protein is Argininosuccinate synthase of Salmonella agona (strain SL483).